We begin with the raw amino-acid sequence, 213 residues long: Orotidine 5'-phosphate decarboxylase (213 aa).

Substrate-binding positions include D9, K31, 59–68 (DFKVADIPAT), S115, 166–176 (PGVGAQGGKIE), G191, and R192. The Proton donor role is filled by K61.

The protein belongs to the OMP decarboxylase family. Type 1 subfamily. Homodimer.

The enzyme catalyses orotidine 5'-phosphate + H(+) = UMP + CO2. Its pathway is pyrimidine metabolism; UMP biosynthesis via de novo pathway; UMP from orotate: step 2/2. Catalyzes the decarboxylation of orotidine 5'-monophosphate (OMP) to uridine 5'-monophosphate (UMP). The sequence is that of Orotidine 5'-phosphate decarboxylase from Methanocaldococcus jannaschii (strain ATCC 43067 / DSM 2661 / JAL-1 / JCM 10045 / NBRC 100440) (Methanococcus jannaschii).